The following is a 407-amino-acid chain: Probable cysteine protease atg4 (407 aa).

Cysteine 136 acts as the Nucleophile in catalysis. Residues aspartate 310 and histidine 312 contribute to the active site.

Belongs to the peptidase C54 family.

The protein localises to the cytoplasm. It localises to the nucleus. Its subcellular location is the preautophagosomal structure. It catalyses the reaction [protein]-C-terminal L-amino acid-glycyl-phosphatidylethanolamide + H2O = [protein]-C-terminal L-amino acid-glycine + a 1,2-diacyl-sn-glycero-3-phosphoethanolamine. Functionally, cysteine protease that is required for autophagy. Plays a key role in cytoplasm to vacuole transport (Cvt) and autophagy by mediating both proteolytic activation and delipidation of atg8. The protease activity is required for proteolytic activation of atg8 by the cleavage of the C-terminal amino acid of atg8 to reveal a C-terminal glycine. Azg8 ubiquitin-like activity requires the exposure of the glycine at the C-terminus for its conjugation to phosphatidylethanolamine (PE) and its insertion to membranes, which is necessary for autophagy. The atg8-PE conjugate mediates tethering between adjacent membranes and stimulates membrane hemifusion, leading to expansion of the autophagosomal membrane during autophagy. In addition to the protease activity, also catalyzes deconjugation of PE-conjugated forms of atg8 during macroautophagy since atg8 delipidation is required to release the protein from membranes, which facilitates multiple events during macroautophagy, and especially for efficient autophagosome biogenesis, the assembly of atg99-containing tubulovesicular clusters into phagophores/autophagosomes, and for the disassembly of PAS-associated ATG components. Atg8 delipidation by atg4 also recycles atg8-PE generated on inappropriate membranes to maintain a reservoir of unlipidated atg8 that is required for autophagosome formation at the PAS. In Aspergillus oryzae (strain ATCC 42149 / RIB 40) (Yellow koji mold), this protein is Probable cysteine protease atg4.